The chain runs to 334 residues: Holliday junction branch migration complex subunit RuvB (334 aa).

Residues 1 to 182 are large ATPase domain (RuvB-L); that stretch reads MDERLVSTEA…FGVHARLEYY (182 aa). Residues Leu-21, Arg-22, Gly-63, Lys-66, Thr-67, Thr-68, 129–131, Arg-172, Tyr-182, and Arg-219 contribute to the ATP site; that span reads EDF. Residue Thr-67 participates in Mg(2+) binding. Residues 183–253 are small ATPAse domain (RuvB-S); the sequence is EQRDLAHIVS…IAEDALERLQ (71 aa). A head domain (RuvB-H) region spans residues 256–334; the sequence is KLGLDHIDHK…HFQMEVPIRD (79 aa). DNA-binding residues include Arg-311 and Arg-316.

Belongs to the RuvB family. As to quaternary structure, homohexamer. Forms an RuvA(8)-RuvB(12)-Holliday junction (HJ) complex. HJ DNA is sandwiched between 2 RuvA tetramers; dsDNA enters through RuvA and exits via RuvB. An RuvB hexamer assembles on each DNA strand where it exits the tetramer. Each RuvB hexamer is contacted by two RuvA subunits (via domain III) on 2 adjacent RuvB subunits; this complex drives branch migration. In the full resolvosome a probable DNA-RuvA(4)-RuvB(12)-RuvC(2) complex forms which resolves the HJ.

The protein localises to the cytoplasm. The catalysed reaction is ATP + H2O = ADP + phosphate + H(+). In terms of biological role, the RuvA-RuvB-RuvC complex processes Holliday junction (HJ) DNA during genetic recombination and DNA repair, while the RuvA-RuvB complex plays an important role in the rescue of blocked DNA replication forks via replication fork reversal (RFR). RuvA specifically binds to HJ cruciform DNA, conferring on it an open structure. The RuvB hexamer acts as an ATP-dependent pump, pulling dsDNA into and through the RuvAB complex. RuvB forms 2 homohexamers on either side of HJ DNA bound by 1 or 2 RuvA tetramers; 4 subunits per hexamer contact DNA at a time. Coordinated motions by a converter formed by DNA-disengaged RuvB subunits stimulates ATP hydrolysis and nucleotide exchange. Immobilization of the converter enables RuvB to convert the ATP-contained energy into a lever motion, pulling 2 nucleotides of DNA out of the RuvA tetramer per ATP hydrolyzed, thus driving DNA branch migration. The RuvB motors rotate together with the DNA substrate, which together with the progressing nucleotide cycle form the mechanistic basis for DNA recombination by continuous HJ branch migration. Branch migration allows RuvC to scan DNA until it finds its consensus sequence, where it cleaves and resolves cruciform DNA. The sequence is that of Holliday junction branch migration complex subunit RuvB from Bacillus pumilus (strain SAFR-032).